The following is a 400-amino-acid chain: Mannitol-1-phosphate 5-dehydrogenase (400 aa).

Ala-12–Gly-23 lines the NAD(+) pocket. The active site involves Lys-221.

It belongs to the mannitol dehydrogenase family. As to quaternary structure, monomer.

The enzyme catalyses D-mannitol 1-phosphate + NAD(+) = beta-D-fructose 6-phosphate + NADH + H(+). Functionally, catalyzes the NAD(H)-dependent interconversion of D-fructose 6-phosphate and D-mannitol 1-phosphate in the mannitol metabolic pathway. The protein is Mannitol-1-phosphate 5-dehydrogenase of Pyricularia oryzae (strain Y34) (Rice blast fungus).